The chain runs to 140 residues: Large-conductance mechanosensitive channel (140 aa).

3 helical membrane-spanning segments follow: residues 7–27, 30–50, and 64–84; these read EFAF…GAAF, IITS…FGTV, and GLFV…FLFV.

This sequence belongs to the MscL family. As to quaternary structure, homopentamer.

The protein localises to the cell membrane. In terms of biological role, channel that opens in response to stretch forces in the membrane lipid bilayer. May participate in the regulation of osmotic pressure changes within the cell. This is Large-conductance mechanosensitive channel from Staphylococcus carnosus (strain TM300).